The primary structure comprises 194 residues: Potassium-transporting ATPase KdpC subunit (194 aa).

The helical transmembrane segment at leucine 12–phenylalanine 34 threads the bilayer.

This sequence belongs to the KdpC family. The system is composed of three essential subunits: KdpA, KdpB and KdpC.

The protein resides in the cell inner membrane. Part of the high-affinity ATP-driven potassium transport (or Kdp) system, which catalyzes the hydrolysis of ATP coupled with the electrogenic transport of potassium into the cytoplasm. This subunit acts as a catalytic chaperone that increases the ATP-binding affinity of the ATP-hydrolyzing subunit KdpB by the formation of a transient KdpB/KdpC/ATP ternary complex. In Salmonella agona (strain SL483), this protein is Potassium-transporting ATPase KdpC subunit.